A 204-amino-acid chain; its full sequence is Methylthioribulose-1-phosphate dehydratase (204 aa).

Residues His-94 and His-96 each contribute to the Zn(2+) site.

The protein belongs to the aldolase class II family. MtnB subfamily. Zn(2+) is required as a cofactor.

The catalysed reaction is 5-(methylsulfanyl)-D-ribulose 1-phosphate = 5-methylsulfanyl-2,3-dioxopentyl phosphate + H2O. The protein operates within amino-acid biosynthesis; L-methionine biosynthesis via salvage pathway; L-methionine from S-methyl-5-thio-alpha-D-ribose 1-phosphate: step 2/6. Catalyzes the dehydration of methylthioribulose-1-phosphate (MTRu-1-P) into 2,3-diketo-5-methylthiopentyl-1-phosphate (DK-MTP-1-P). The sequence is that of Methylthioribulose-1-phosphate dehydratase from Pseudomonas savastanoi pv. phaseolicola (strain 1448A / Race 6) (Pseudomonas syringae pv. phaseolicola (strain 1448A / Race 6)).